We begin with the raw amino-acid sequence, 100 residues long: Probable antitoxin MazE1 (100 aa).

The segment at 77–100 is disordered; the sequence is PYESEAERSAARARRNARQQRSAQ.

Forms a complex with cognate toxin MazF1.

Probable antitoxin component of a type II toxin-antitoxin (TA) system. Labile antitoxin that binds to cognate MazF1 toxin and counteracts its endoribonuclease activity. This Mycobacterium bovis (strain ATCC BAA-935 / AF2122/97) protein is Probable antitoxin MazE1 (mazE1).